The primary structure comprises 188 residues: Sec-independent protein translocase protein TatB (188 aa).

A helical transmembrane segment spans residues 1 to 21; sequence MFDIGWSELVVIGVVALVAIG. Residues 147–188 are disordered; sequence LPVPAETHALATTDLAPPDLAHPAPAHPEPTNSEPAKDAKAS. Over residues 160 to 170 the composition is skewed to low complexity; it reads DLAPPDLAHPA.

It belongs to the TatB family. In terms of assembly, the Tat system comprises two distinct complexes: a TatABC complex, containing multiple copies of TatA, TatB and TatC subunits, and a separate TatA complex, containing only TatA subunits. Substrates initially bind to the TatABC complex, which probably triggers association of the separate TatA complex to form the active translocon.

The protein localises to the cell inner membrane. Its function is as follows. Part of the twin-arginine translocation (Tat) system that transports large folded proteins containing a characteristic twin-arginine motif in their signal peptide across membranes. Together with TatC, TatB is part of a receptor directly interacting with Tat signal peptides. TatB may form an oligomeric binding site that transiently accommodates folded Tat precursor proteins before their translocation. The protein is Sec-independent protein translocase protein TatB of Rhodopseudomonas palustris (strain HaA2).